Consider the following 80-residue polypeptide: Cytochrome c oxidase subunit 7A1, mitochondrial (80 aa).

Residues 1 to 21 (MRALRVSQALVRSFSSSTRSH) constitute a mitochondrion transit peptide. Residues 22–46 (LENRVAEKQKLFQADNDLPVHLKGG) lie on the Mitochondrial matrix side of the membrane. A helical membrane pass occupies residues 47-75 (GMDNVLYRLTMTLTLGGTAYCLYCLGWAS). Residues 76 to 80 (FPHKK) are Mitochondrial intermembrane-facing.

This sequence belongs to the cytochrome c oxidase VIIa family. In terms of assembly, component of the complex IV (CIV, cytochrome c oxidase), a multisubunit enzyme composed of 14 subunits. The complex is composed of a catalytic core of 3 subunits MT-CO1, MT-CO2 and MT-CO3, encoded in the mitochondrial DNA, and 11 supernumerary subunits COX4I, COX5A, COX5B, COX6A, COX6B, COX6C, COX7A, COX7B, COX7C, COX8 and NDUFA4, which are encoded in the nuclear genome. The complex exists as a monomer or a dimer and forms supercomplexes (SCs) in the inner mitochondrial membrane with NADH-ubiquinone oxidoreductase (complex I, CI) and ubiquinol-cytochrome c oxidoreductase (cytochrome b-c1 complex, complex III, CIII), resulting in different assemblies (supercomplex SCI(1)III(2)IV(1) and megacomplex MCI(2)III(2)IV(2)).

Its subcellular location is the mitochondrion inner membrane. It functions in the pathway energy metabolism; oxidative phosphorylation. Functionally, component of the mitochondrial respiratory complex IV (CIV, also named cytochrome c oxidase complex), the last enzyme in the mitochondrial electron transport chain which drives oxidative phosphorylation. The CIV complex is the component of the respiratory chain that catalyzes the reduction of oxygen to water. Acts as an assembly factor that specifically drives the homodimerization of CIV complexes, mediating the formation of mitochondrial respiratory supercomplexes (respirasomes) containing two CIV: supercomplxes with two molecules of CIV show improved activity. Despite being highly expressed in brown adipose tissue, not required for thermogenesis. This chain is Cytochrome c oxidase subunit 7A1, mitochondrial, found in Mus musculus (Mouse).